The primary structure comprises 293 residues: 4-hydroxy-tetrahydrodipicolinate synthase (293 aa).

Thr45 contacts pyruvate. Tyr133 acts as the Proton donor/acceptor in catalysis. Residue Lys161 is the Schiff-base intermediate with substrate of the active site. Residue Ile204 coordinates pyruvate.

It belongs to the DapA family. As to quaternary structure, homotetramer; dimer of dimers.

It is found in the cytoplasm. The enzyme catalyses L-aspartate 4-semialdehyde + pyruvate = (2S,4S)-4-hydroxy-2,3,4,5-tetrahydrodipicolinate + H2O + H(+). The protein operates within amino-acid biosynthesis; L-lysine biosynthesis via DAP pathway; (S)-tetrahydrodipicolinate from L-aspartate: step 3/4. In terms of biological role, catalyzes the condensation of (S)-aspartate-beta-semialdehyde [(S)-ASA] and pyruvate to 4-hydroxy-tetrahydrodipicolinate (HTPA). The sequence is that of 4-hydroxy-tetrahydrodipicolinate synthase from Yersinia pseudotuberculosis serotype O:1b (strain IP 31758).